A 252-amino-acid chain; its full sequence is Small ribosomal subunit protein uS3 (252 aa).

Residues I39–V109 form the KH type-2 domain. Basic and acidic residues predominate over residues E221–S241. A disordered region spans residues E221–G252. The span at Q242–G252 shows a compositional bias: basic residues.

Belongs to the universal ribosomal protein uS3 family. As to quaternary structure, part of the 30S ribosomal subunit. Forms a tight complex with proteins S10 and S14.

Binds the lower part of the 30S subunit head. Binds mRNA in the 70S ribosome, positioning it for translation. The sequence is that of Small ribosomal subunit protein uS3 from Chlorobium luteolum (strain DSM 273 / BCRC 81028 / 2530) (Pelodictyon luteolum).